Here is a 419-residue protein sequence, read N- to C-terminus: Pyrrolysine--tRNA ligase (419 aa).

Positions 100–157 (APKVKKAMPKSVSRAPKPLENSVSAKASTNTSRSVPSPAKSTPNSSVPASAPAPSLTR) are disordered. The span at 120 to 141 (NSVSAKASTNTSRSVPSPAKST) shows a compositional bias: polar residues. The segment covering 142-154 (PNSSVPASAPAPS) has biased composition (low complexity).

This sequence belongs to the class-II aminoacyl-tRNA synthetase family.

It localises to the cytoplasm. The catalysed reaction is tRNA(Pyl) + L-pyrrolysine + ATP = L-pyrrolysyl-tRNA(Pyl) + AMP + diphosphate. Its function is as follows. Catalyzes the attachment of pyrrolysine to tRNA(Pyl). Pyrrolysine is a lysine derivative encoded by the termination codon UAG. This is Pyrrolysine--tRNA ligase (pylS) from Methanosarcina barkeri.